A 238-amino-acid polypeptide reads, in one-letter code: Tetrahydromethanopterin S-methyltransferase subunit A 1 (238 aa).

The Cytoplasmic segment spans residues 2–218 (VEKKSPAEGW…RMFAGMYSGK (217 aa)). His84 lines the 5-hydroxybenzimidazolylcob(I)amide pocket. The helical transmembrane segment at 219-237 (VQGIMIGLAFTLTLGILLL) threads the bilayer. A topological domain (extracellular) is located at residue Val238.

This sequence belongs to the MtrA family. As to quaternary structure, the complex is composed of 8 subunits; MtrA, MtrB, MtrC, MtrD, MtrE, MtrF, MtrG and MtrH. It depends on 5-hydroxybenzimidazolylcob(I)amide as a cofactor.

It localises to the cell membrane. It carries out the reaction 5-methyl-5,6,7,8-tetrahydromethanopterin + coenzyme M + 2 Na(+)(in) = 5,6,7,8-tetrahydromethanopterin + methyl-coenzyme M + 2 Na(+)(out). Its pathway is one-carbon metabolism; methanogenesis from CO(2); methyl-coenzyme M from 5,10-methylene-5,6,7,8-tetrahydromethanopterin: step 2/2. Part of a complex that catalyzes the formation of methyl-coenzyme M and tetrahydromethanopterin from coenzyme M and methyl-tetrahydromethanopterin. This is an energy-conserving, sodium-ion translocating step. The sequence is that of Tetrahydromethanopterin S-methyltransferase subunit A 1 from Methanothermobacter marburgensis (strain ATCC BAA-927 / DSM 2133 / JCM 14651 / NBRC 100331 / OCM 82 / Marburg) (Methanobacterium thermoautotrophicum).